Consider the following 368-residue polypeptide: tRNA-specific 2-thiouridylase MnmA (368 aa).

ATP is bound by residues G11–S18 and M37. Residues N97–D99 are interaction with target base in tRNA. Residue C102 is the Nucleophile of the active site. An intrachain disulfide couples C102 to C199. G127 lines the ATP pocket. The interval K149–Q151 is interaction with tRNA. Residue C199 is the Cysteine persulfide intermediate of the active site. The segment at R311–Y312 is interaction with tRNA.

Belongs to the MnmA/TRMU family. In terms of assembly, interacts with TusE.

Its subcellular location is the cytoplasm. It carries out the reaction S-sulfanyl-L-cysteinyl-[protein] + uridine(34) in tRNA + AH2 + ATP = 2-thiouridine(34) in tRNA + L-cysteinyl-[protein] + A + AMP + diphosphate + H(+). Its function is as follows. Catalyzes the 2-thiolation of uridine at the wobble position (U34) of tRNA(Lys), tRNA(Glu) and tRNA(Gln), leading to the formation of s(2)U34, the first step of tRNA-mnm(5)s(2)U34 synthesis. Sulfur is provided by IscS, via a sulfur-relay system. Binds ATP and its substrate tRNAs. This Escherichia coli O6:H1 (strain CFT073 / ATCC 700928 / UPEC) protein is tRNA-specific 2-thiouridylase MnmA.